A 142-amino-acid polypeptide reads, in one-letter code: Large ribosomal subunit protein uL13 (142 aa).

It belongs to the universal ribosomal protein uL13 family. In terms of assembly, part of the 50S ribosomal subunit.

In terms of biological role, this protein is one of the early assembly proteins of the 50S ribosomal subunit, although it is not seen to bind rRNA by itself. It is important during the early stages of 50S assembly. The polypeptide is Large ribosomal subunit protein uL13 (Syntrophotalea carbinolica (strain DSM 2380 / NBRC 103641 / GraBd1) (Pelobacter carbinolicus)).